Here is a 570-residue protein sequence, read N- to C-terminus: Rho GTPase-activating protein gacEE (570 aa).

The PH domain occupies 127-233; that stretch reads NSDISGVLLK…WVTTINNCID (107 aa). Residues 224–343 enclose the C2 domain; it reads WVTTINNCID…PNGSEISLWL (120 aa). The Ca(2+) site is built by D260, D266, D312, D314, and D320. In terms of domain architecture, Rho-GAP spans 381–567; sequence NSLEAIVKNR…FVFENSQQIL (187 aa).

It depends on Ca(2+) as a cofactor.

Its subcellular location is the cytoplasm. In terms of biological role, rho GTPase-activating protein involved in the signal transduction pathway. The sequence is that of Rho GTPase-activating protein gacEE (gacEE) from Dictyostelium discoideum (Social amoeba).